Here is a 191-residue protein sequence, read N- to C-terminus: Thiol:disulfide interchange protein TxlA (191 aa).

Residues 14–30 form a helical membrane-spanning segment; it reads ILVIAAALVLTILVVLG. Residues 27-148 form the Thioredoxin domain; that stretch reads VVLGSRQPSA…LAANLDALVE (122 aa). A disulfide bridge links C69 with C72. The segment covering 165 to 185 has biased composition (polar residues); that stretch reads SADLQPSRSSQTDPRSHSGQV. A disordered region spans residues 165–191; it reads SADLQPSRSSQTDPRSHSGQVQDGVLD.

It belongs to the thioredoxin family.

It is found in the cell membrane. Functionally, required for disulfide bond formation in some proteins. Acts by transferring its disulfide bond to other proteins and is reduced in the process. The protein is Thiol:disulfide interchange protein TxlA (txlA) of Synechococcus elongatus (strain ATCC 33912 / PCC 7942 / FACHB-805) (Anacystis nidulans R2).